Consider the following 56-residue polypeptide: Conotoxin Cal6.41a (56 aa).

Positions 1–23 are cleaved as a signal peptide; sequence MSGSGAMLLGLLILVAMATSLDT. Disulfide bonds link cysteine 27-cysteine 41, cysteine 33-cysteine 50, and cysteine 40-cysteine 54.

As to expression, expressed by the venom duct.

The protein localises to the secreted. Functionally, probable neurotoxin. The protein is Conotoxin Cal6.41a of Californiconus californicus (California cone).